A 565-amino-acid chain; its full sequence is Proline--tRNA ligase (565 aa).

The protein belongs to the class-II aminoacyl-tRNA synthetase family. ProS type 1 subfamily. As to quaternary structure, homodimer.

It is found in the cytoplasm. It catalyses the reaction tRNA(Pro) + L-proline + ATP = L-prolyl-tRNA(Pro) + AMP + diphosphate. Catalyzes the attachment of proline to tRNA(Pro) in a two-step reaction: proline is first activated by ATP to form Pro-AMP and then transferred to the acceptor end of tRNA(Pro). As ProRS can inadvertently accommodate and process non-cognate amino acids such as alanine and cysteine, to avoid such errors it has two additional distinct editing activities against alanine. One activity is designated as 'pretransfer' editing and involves the tRNA(Pro)-independent hydrolysis of activated Ala-AMP. The other activity is designated 'posttransfer' editing and involves deacylation of mischarged Ala-tRNA(Pro). The misacylated Cys-tRNA(Pro) is not edited by ProRS. The protein is Proline--tRNA ligase of Lactobacillus johnsonii (strain CNCM I-12250 / La1 / NCC 533).